Consider the following 538-residue polypeptide: CTP synthase (538 aa).

The segment at 1–269 (MSPRKYVIVT…ARLVERRLFG (269 aa)) is amidoligase domain. Serine 15 lines the CTP pocket. Serine 15 contacts UTP. 16–21 (SVGKGL) is a binding site for ATP. Tyrosine 56 provides a ligand contact to L-glutamine. Aspartate 73 contacts ATP. Positions 73 and 143 each coordinate Mg(2+). CTP-binding positions include 150–152 (DIE), 190–195 (KTKPVQ), and lysine 226. Residues 190 to 195 (KTKPVQ) and lysine 226 contribute to the UTP site. The 245-residue stretch at 294–538 (KVAMVGKYTK…FVTAVARLRG (245 aa)) folds into the Glutamine amidotransferase type-1 domain. Residue glycine 358 coordinates L-glutamine. Cysteine 385 functions as the Nucleophile; for glutamine hydrolysis in the catalytic mechanism. L-glutamine is bound by residues 386–389 (FGMQ), glutamate 409, and arginine 466. Catalysis depends on residues histidine 512 and glutamate 514.

Belongs to the CTP synthase family. In terms of assembly, homotetramer.

It catalyses the reaction UTP + L-glutamine + ATP + H2O = CTP + L-glutamate + ADP + phosphate + 2 H(+). The enzyme catalyses L-glutamine + H2O = L-glutamate + NH4(+). It carries out the reaction UTP + NH4(+) + ATP = CTP + ADP + phosphate + 2 H(+). It participates in pyrimidine metabolism; CTP biosynthesis via de novo pathway; CTP from UDP: step 2/2. With respect to regulation, allosterically activated by GTP, when glutamine is the substrate; GTP has no effect on the reaction when ammonia is the substrate. The allosteric effector GTP functions by stabilizing the protein conformation that binds the tetrahedral intermediate(s) formed during glutamine hydrolysis. Inhibited by the product CTP, via allosteric rather than competitive inhibition. Its function is as follows. Catalyzes the ATP-dependent amination of UTP to CTP with either L-glutamine or ammonia as the source of nitrogen. Regulates intracellular CTP levels through interactions with the four ribonucleotide triphosphates. The chain is CTP synthase from Aeropyrum pernix (strain ATCC 700893 / DSM 11879 / JCM 9820 / NBRC 100138 / K1).